The sequence spans 203 residues: uncharacterized protein (203 aa).

Residues 9 to 29 (LVVLFTIVTFGLVSPPAALMA) traverse the membrane as a helical segment.

It localises to the membrane. This is an uncharacterized protein from Bacillus subtilis (strain 168).